The following is a 223-amino-acid chain: Deoxyribose-phosphate aldolase (223 aa).

D89 (proton donor/acceptor) is an active-site residue. K152 acts as the Schiff-base intermediate with acetaldehyde in catalysis. Residue K181 is the Proton donor/acceptor of the active site.

This sequence belongs to the DeoC/FbaB aldolase family. DeoC type 1 subfamily.

The protein resides in the cytoplasm. It catalyses the reaction 2-deoxy-D-ribose 5-phosphate = D-glyceraldehyde 3-phosphate + acetaldehyde. It participates in carbohydrate degradation; 2-deoxy-D-ribose 1-phosphate degradation; D-glyceraldehyde 3-phosphate and acetaldehyde from 2-deoxy-alpha-D-ribose 1-phosphate: step 2/2. Functionally, catalyzes a reversible aldol reaction between acetaldehyde and D-glyceraldehyde 3-phosphate to generate 2-deoxy-D-ribose 5-phosphate. This is Deoxyribose-phosphate aldolase from Bacillus cereus (strain ZK / E33L).